Reading from the N-terminus, the 204-residue chain is Large ribosomal subunit protein uL4 (204 aa).

The disordered stretch occupies residues Gln-49–Arg-72.

The protein belongs to the universal ribosomal protein uL4 family. Part of the 50S ribosomal subunit.

Its function is as follows. One of the primary rRNA binding proteins, this protein initially binds near the 5'-end of the 23S rRNA. It is important during the early stages of 50S assembly. It makes multiple contacts with different domains of the 23S rRNA in the assembled 50S subunit and ribosome. Forms part of the polypeptide exit tunnel. The protein is Large ribosomal subunit protein uL4 of Saccharophagus degradans (strain 2-40 / ATCC 43961 / DSM 17024).